The chain runs to 169 residues: Peptide deformylase (169 aa).

Residues C94 and H136 each coordinate Fe cation. Residue E137 is part of the active site. H140 contacts Fe cation.

This sequence belongs to the polypeptide deformylase family. Fe(2+) serves as cofactor.

The catalysed reaction is N-terminal N-formyl-L-methionyl-[peptide] + H2O = N-terminal L-methionyl-[peptide] + formate. Removes the formyl group from the N-terminal Met of newly synthesized proteins. Requires at least a dipeptide for an efficient rate of reaction. N-terminal L-methionine is a prerequisite for activity but the enzyme has broad specificity at other positions. The protein is Peptide deformylase of Desulfotalea psychrophila (strain LSv54 / DSM 12343).